Consider the following 193-residue polypeptide: MNFLAHLHLATLADSSLLGNLLADFVRGNPQGEYSPEIVAGIMMHRRVDVMTDTLPLVKEARGYFSADYRRVAPITLDVLWDHFLSRNWDKLMPDCSLPDFIEHAQCQILPHLPLTPARFQNLNAYLWPERWLERYAELPFIADVLQGMANRRPKLAALAGSFHDIEQHYQPLEQLFWAFYPAMMSQAQDKQI.

Belongs to the AcpH family.

It carries out the reaction holo-[ACP] + H2O = apo-[ACP] + (R)-4'-phosphopantetheine + H(+). Functionally, converts holo-ACP to apo-ACP by hydrolytic cleavage of the phosphopantetheine prosthetic group from ACP. This chain is Acyl carrier protein phosphodiesterase, found in Yersinia enterocolitica serotype O:8 / biotype 1B (strain NCTC 13174 / 8081).